A 631-amino-acid polypeptide reads, in one-letter code: DNA mismatch repair protein MutL (631 aa).

2 disordered regions span residues 337-362 (PHSP…ELQS) and 400-429 (AVQS…RAEL).

Belongs to the DNA mismatch repair MutL/HexB family.

Its function is as follows. This protein is involved in the repair of mismatches in DNA. It is required for dam-dependent methyl-directed DNA mismatch repair. May act as a 'molecular matchmaker', a protein that promotes the formation of a stable complex between two or more DNA-binding proteins in an ATP-dependent manner without itself being part of a final effector complex. In Shewanella oneidensis (strain ATCC 700550 / JCM 31522 / CIP 106686 / LMG 19005 / NCIMB 14063 / MR-1), this protein is DNA mismatch repair protein MutL.